The sequence spans 488 residues: ATP synthase subunit beta (488 aa).

Residue 164–171 (GGAGVGKT) coordinates ATP.

It belongs to the ATPase alpha/beta chains family. F-type ATPases have 2 components, CF(1) - the catalytic core - and CF(0) - the membrane proton channel. CF(1) has five subunits: alpha(3), beta(3), gamma(1), delta(1), epsilon(1). CF(0) has four main subunits: a(1), b(1), b'(1) and c(9-12).

It is found in the cellular thylakoid membrane. It catalyses the reaction ATP + H2O + 4 H(+)(in) = ADP + phosphate + 5 H(+)(out). Its function is as follows. Produces ATP from ADP in the presence of a proton gradient across the membrane. The catalytic sites are hosted primarily by the beta subunits. This Prochlorococcus marinus (strain MIT 9313) protein is ATP synthase subunit beta.